A 235-amino-acid polypeptide reads, in one-letter code: Phosphoribosylaminoimidazole-succinocarboxamide synthase (235 aa).

This sequence belongs to the SAICAR synthetase family.

It carries out the reaction 5-amino-1-(5-phospho-D-ribosyl)imidazole-4-carboxylate + L-aspartate + ATP = (2S)-2-[5-amino-1-(5-phospho-beta-D-ribosyl)imidazole-4-carboxamido]succinate + ADP + phosphate + 2 H(+). It participates in purine metabolism; IMP biosynthesis via de novo pathway; 5-amino-1-(5-phospho-D-ribosyl)imidazole-4-carboxamide from 5-amino-1-(5-phospho-D-ribosyl)imidazole-4-carboxylate: step 1/2. This chain is Phosphoribosylaminoimidazole-succinocarboxamide synthase, found in Thermoanaerobacter pseudethanolicus (strain ATCC 33223 / 39E) (Clostridium thermohydrosulfuricum).